A 285-amino-acid chain; its full sequence is tRNA pseudouridine synthase B (285 aa).

Aspartate 38 serves as the catalytic Nucleophile.

It belongs to the pseudouridine synthase TruB family. Type 1 subfamily.

It carries out the reaction uridine(55) in tRNA = pseudouridine(55) in tRNA. Its function is as follows. Responsible for synthesis of pseudouridine from uracil-55 in the psi GC loop of transfer RNAs. The chain is tRNA pseudouridine synthase B from Geobacillus kaustophilus (strain HTA426).